We begin with the raw amino-acid sequence, 426 residues long: Serine--tRNA ligase (426 aa).

L-serine is bound at residue 233–235 (TSE). 264–266 (RAE) is a binding site for ATP. An L-serine-binding site is contributed by Glu287. 351–354 (EISS) lines the ATP pocket. Residue Ser387 participates in L-serine binding.

It belongs to the class-II aminoacyl-tRNA synthetase family. Type-1 seryl-tRNA synthetase subfamily. Homodimer. The tRNA molecule binds across the dimer.

The protein localises to the cytoplasm. The enzyme catalyses tRNA(Ser) + L-serine + ATP = L-seryl-tRNA(Ser) + AMP + diphosphate + H(+). The catalysed reaction is tRNA(Sec) + L-serine + ATP = L-seryl-tRNA(Sec) + AMP + diphosphate + H(+). Its pathway is aminoacyl-tRNA biosynthesis; selenocysteinyl-tRNA(Sec) biosynthesis; L-seryl-tRNA(Sec) from L-serine and tRNA(Sec): step 1/1. Its function is as follows. Catalyzes the attachment of serine to tRNA(Ser). Is also able to aminoacylate tRNA(Sec) with serine, to form the misacylated tRNA L-seryl-tRNA(Sec), which will be further converted into selenocysteinyl-tRNA(Sec). The chain is Serine--tRNA ligase from Xanthomonas euvesicatoria pv. vesicatoria (strain 85-10) (Xanthomonas campestris pv. vesicatoria).